Consider the following 1013-residue polypeptide: Probable beta-galactosidase B (1013 aa).

The first 21 residues, 1-21 (MTRILNCLLVLLACLGVSSKA), serve as a signal peptide directing secretion. Tyrosine 90 provides a ligand contact to substrate. Residue asparagine 100 is glycosylated (N-linked (GlcNAc...) asparagine). Positions 135, 136, 137, and 195 each coordinate substrate. Catalysis depends on glutamate 196, which acts as the Proton donor. Residue asparagine 211 is glycosylated (N-linked (GlcNAc...) asparagine). Tyrosine 265 lines the substrate pocket. Cysteine 271 and cysteine 324 are disulfide-bonded. The Nucleophile role is filled by glutamate 308. A substrate-binding site is contributed by tyrosine 373. Residues asparagine 411, asparagine 442, asparagine 456, asparagine 626, asparagine 735, asparagine 768, and asparagine 775 are each glycosylated (N-linked (GlcNAc...) asparagine).

The protein belongs to the glycosyl hydrolase 35 family.

The protein resides in the secreted. It carries out the reaction Hydrolysis of terminal non-reducing beta-D-galactose residues in beta-D-galactosides.. In terms of biological role, cleaves beta-linked terminal galactosyl residues from gangliosides, glycoproteins, and glycosaminoglycans. This chain is Probable beta-galactosidase B (lacB), found in Penicillium rubens (strain ATCC 28089 / DSM 1075 / NRRL 1951 / Wisconsin 54-1255) (Penicillium chrysogenum).